The sequence spans 464 residues: Citrate synthase, mitochondrial (464 aa).

A mitochondrion-targeting transit peptide spans 1 to 27; sequence MALLTAAARLFGAKNASCLVLAARHAS. The short motif at 2-21 is the SIFI-degron element; it reads ALLTAAARLFGAKNASCLVL. Residue Lys-76 is modified to N6-acetyllysine; alternate. The residue at position 76 (Lys-76) is an N6-succinyllysine; alternate. N6-succinyllysine occurs at positions 103 and 193. Ser-226 is modified (phosphoserine). His-301 is an active-site residue. 2 positions are modified to N6-acetyllysine; alternate: Lys-321 and Lys-327. Lys-321 and Lys-327 each carry N6-succinyllysine; alternate. Residue His-347 is part of the active site. Position 356 (Arg-356) interacts with oxaloacetate. An N6-acetyllysine; alternate modification is found at Lys-375. Lys-375 is subject to N6-succinyllysine; alternate. Lys-382 is subject to N6-acetyllysine. At Lys-393 the chain carries N6-acetyllysine; alternate. Residue Lys-393 is modified to N6-succinyllysine; alternate. Residue Lys-395 is modified to N6,N6,N6-trimethyllysine. Asp-402 is an active-site residue. Oxaloacetate contacts are provided by Arg-428 and Arg-448. N6-succinyllysine is present on Lys-450. Position 459 is an N6-acetyllysine; alternate (Lys-459). N6-succinyllysine; alternate is present on Lys-459.

Belongs to the citrate synthase family. In terms of assembly, homodimer. Methylated. Trimethylation at Lys-395 by CSKMT decreases citrate synthase activity. In terms of processing, in response to mitochondrial stress, the precursor protein is ubiquitinated by the SIFI complex in the cytoplasm before mitochondrial import, leading to its degradation. Within the SIFI complex, UBR4 initiates ubiquitin chain that are further elongated or branched by KCMF1.

The protein localises to the mitochondrion matrix. The enzyme catalyses oxaloacetate + acetyl-CoA + H2O = citrate + CoA + H(+). Its pathway is carbohydrate metabolism; tricarboxylic acid cycle; isocitrate from oxaloacetate: step 1/2. Functionally, key enzyme of the Krebs tricarboxylic acid cycle which catalyzes the synthesis of citrate from acetyl coenzyme A and oxaloacetate. The polypeptide is Citrate synthase, mitochondrial (CS) (Sus scrofa (Pig)).